The chain runs to 134 residues: Fluoride-specific ion channel FluC (134 aa).

A run of 4 helical transmembrane segments spans residues 7-27, 38-58, 69-89, and 110-130; these read LAVA…TIMA, GTLL…IVLV, LFLF…AAES, and VGSL…LLGH. Residues G77 and T80 each coordinate Na(+).

Belongs to the fluoride channel Fluc/FEX (TC 1.A.43) family.

The protein localises to the cell inner membrane. The catalysed reaction is fluoride(in) = fluoride(out). Its activity is regulated as follows. Na(+) is not transported, but it plays an essential structural role and its presence is essential for fluoride channel function. Functionally, fluoride-specific ion channel. Important for reducing fluoride concentration in the cell, thus reducing its toxicity. This is Fluoride-specific ion channel FluC from Legionella pneumophila (strain Paris).